The sequence spans 946 residues: Protocadherin alpha-10 (946 aa).

The N-terminal stretch at M1 to G30 is a signal peptide. 6 consecutive Cadherin domains span residues Q31 to F134, P135 to F243, D244 to I351, I352 to F456, A457 to L566, and V582 to A679. Residues Q31 to N697 lie on the Extracellular side of the membrane. N-linked (GlcNAc...) asparagine glycosylation is present at N258. N-linked (GlcNAc...) asparagine glycosylation occurs at N549. The helical transmembrane segment at V698–Y718 threads the bilayer. Topologically, residues T719–Q946 are cytoplasmic. PXXP repeat units lie at residues P734–P737, P774–P777, P795–P798, P828–P831, P869–P872, and P887–P890. Residues P734–P890 are 6 X 4 AA repeats of P-X-X-P. Disordered regions lie at residues A826 to P852 and F865 to Q946. Over residues D905–K919 the composition is skewed to basic and acidic residues.

Its subcellular location is the cell membrane. Potential calcium-dependent cell-adhesion protein. May be involved in the establishment and maintenance of specific neuronal connections in the brain. The chain is Protocadherin alpha-10 from Mus musculus (Mouse).